Reading from the N-terminus, the 244-residue chain is 1-(5-phosphoribosyl)-5-[(5-phosphoribosylamino)methylideneamino] imidazole-4-carboxamide isomerase (244 aa).

The Proton acceptor role is filled by aspartate 10. Aspartate 129 serves as the catalytic Proton donor.

This sequence belongs to the HisA/HisF family.

Its subcellular location is the cytoplasm. It carries out the reaction 1-(5-phospho-beta-D-ribosyl)-5-[(5-phospho-beta-D-ribosylamino)methylideneamino]imidazole-4-carboxamide = 5-[(5-phospho-1-deoxy-D-ribulos-1-ylimino)methylamino]-1-(5-phospho-beta-D-ribosyl)imidazole-4-carboxamide. It functions in the pathway amino-acid biosynthesis; L-histidine biosynthesis; L-histidine from 5-phospho-alpha-D-ribose 1-diphosphate: step 4/9. This is 1-(5-phosphoribosyl)-5-[(5-phosphoribosylamino)methylideneamino] imidazole-4-carboxamide isomerase from Rhodococcus erythropolis (strain PR4 / NBRC 100887).